The primary structure comprises 232 residues: Protein DOG1-like 4 (232 aa).

Residues 9-229 (EEKFLEFYES…RRWGNRRHYV (221 aa)) form the DOG1 domain.

The chain is Protein DOG1-like 4 from Arabidopsis thaliana (Mouse-ear cress).